Here is a 216-residue protein sequence, read N- to C-terminus: 4-hydroxy-tetrahydrodipicolinate reductase (216 aa).

Residues 9-12, 71-73, and 95-98 each bind NAD(+); these read SGRM, GTT, and AYNF. H127 (proton donor/acceptor) is an active-site residue. Position 128 (H128) interacts with (S)-2,3,4,5-tetrahydrodipicolinate. K131 contacts NAD(+). K131 acts as the Proton donor in catalysis. 137–138 is a (S)-2,3,4,5-tetrahydrodipicolinate binding site; that stretch reads GT.

The protein belongs to the DapB family. As to quaternary structure, homotetramer.

The protein localises to the cytoplasm. It catalyses the reaction (S)-2,3,4,5-tetrahydrodipicolinate + NAD(+) + H2O = (2S,4S)-4-hydroxy-2,3,4,5-tetrahydrodipicolinate + NADH + H(+). The catalysed reaction is (S)-2,3,4,5-tetrahydrodipicolinate + NADP(+) + H2O = (2S,4S)-4-hydroxy-2,3,4,5-tetrahydrodipicolinate + NADPH + H(+). It participates in amino-acid biosynthesis; L-lysine biosynthesis via DAP pathway; (S)-tetrahydrodipicolinate from L-aspartate: step 4/4. Its activity is regulated as follows. Is inhibited by high concentrations of NADH. Its function is as follows. Catalyzes the conversion of 4-hydroxy-tetrahydrodipicolinate (HTPA) to tetrahydrodipicolinate. Uses NADPH as a reductant with much more efficiency than NADH. This Thermotoga maritima (strain ATCC 43589 / DSM 3109 / JCM 10099 / NBRC 100826 / MSB8) protein is 4-hydroxy-tetrahydrodipicolinate reductase.